Here is a 128-residue protein sequence, read N- to C-terminus: Probable 4-amino-4-deoxy-L-arabinose-phosphoundecaprenol flippase subunit ArnF (128 aa).

Topologically, residues 1–2 (MG) are cytoplasmic. The chain crosses the membrane as a helical span at residues 3-23 (LMWGLFSVIIASAAQLSLGFA). Topologically, residues 24–35 (ASHLPPMTHLWD) are periplasmic. Residues 36–56 (FIAALLAFGLDARILLLGLLG) form a helical membrane-spanning segment. Residues 57-76 (YLLSVFCWYKTLHKLALSKA) are Cytoplasmic-facing. Residues 77–97 (YALLSMSYVLVWIASMILPGW) form a helical membrane-spanning segment. At 98–100 (EGT) the chain is on the periplasmic side. A helical membrane pass occupies residues 101-121 (FSLKALLGVACIMSGLMLIFL). The Cytoplasmic portion of the chain corresponds to 122–128 (PTTKQRY).

Belongs to the ArnF family. As to quaternary structure, heterodimer of ArnE and ArnF.

The protein localises to the cell inner membrane. The protein operates within bacterial outer membrane biogenesis; lipopolysaccharide biosynthesis. Its function is as follows. Translocates 4-amino-4-deoxy-L-arabinose-phosphoundecaprenol (alpha-L-Ara4N-phosphoundecaprenol) from the cytoplasmic to the periplasmic side of the inner membrane. The polypeptide is Probable 4-amino-4-deoxy-L-arabinose-phosphoundecaprenol flippase subunit ArnF (Escherichia coli O17:K52:H18 (strain UMN026 / ExPEC)).